The chain runs to 695 residues: G-protein coupled receptor-associated protein LMBRD2 (695 aa).

The Extracellular portion of the chain corresponds to 1 to 5; that stretch reads MSGAA. Residues 6–21 traverse the membrane as a helical segment; the sequence is LGLEIVFVFFLALFLL. Topologically, residues 22-32 are cytoplasmic; sequence HRYGDFKKQHR. Residues 33 to 53 traverse the membrane as a helical segment; sequence LVIIGTLLAWYLCFLIVFILP. Over 54-105 the chain is Extracellular; sequence LDVSTTIYNRCKHAAANSSPPENSNITGLYATANPVPSQHPCFKPWSYIPDG. Asn78 carries an N-linked (GlcNAc...) asparagine glycan. A helical transmembrane segment spans residues 106–126; it reads IMPIFWRVVYWTSQFLTWILL. Over 127 to 150 the chain is Cytoplasmic; it reads PFMQSYARSGGFSITGKIKTALIE. A helical transmembrane segment spans residues 151–171; sequence NAIYYGTYLLIFGAFLIYVAV. The Extracellular segment spans residues 172 to 186; that stretch reads NPHLHLEWNQLQTIG. The chain crosses the membrane as a helical span at residues 187–207; the sequence is IAAANTWGLFLLVLLLGYGLV. Over 208-387 the chain is Cytoplasmic; the sequence is EIPRSYWNGA…ECLLRPWFYK (180 aa). A coiled-coil region spans residues 227-262; the sequence is YFKAAKLMTEKADAEENLEDAMEEVRKVNESIKYNH. Residues 388 to 408 form a helical membrane-spanning segment; sequence ILAVVLSIFSVIVVWSECTFF. Topologically, residues 409-432 are extracellular; it reads STTPVLSLFAVFIQLAEKTYNYIY. Residues 433-453 traverse the membrane as a helical segment; the sequence is IEIACFLSIFFLSICVYSTVF. The Cytoplasmic segment spans residues 454–473; the sequence is RIRVFNYYYLASHHQTDAYS. Residues 474-494 traverse the membrane as a helical segment; the sequence is LLFSGMLFCRLTPPLCLNFLG. The Extracellular portion of the chain corresponds to 495 to 521; the sequence is LTHMDSSISHKNTQPTAYTSIMGSMKV. A helical transmembrane segment spans residues 522 to 542; the sequence is LSFIADGFYIYYPMLVVILCI. The Cytoplasmic portion of the chain corresponds to 543-695; that stretch reads ATYFSLGTRC…MSRSDIFNDV (153 aa). Positions 571-603 form a coiled coil; that stretch reads LVNEGKELIRKEKRKRQRQEEGENRRREWKERY. Residues 581–628 are disordered; the sequence is KEKRKRQRQEEGENRRREWKERYGHNREDSTRNRNIHTDPKESNFSDV. Basic and acidic residues predominate over residues 588-624; it reads RQEEGENRRREWKERYGHNREDSTRNRNIHTDPKESN. Ser633 carries the phosphoserine modification. The tract at residues 662–682 is disordered; the sequence is AETFTDDPLESESGRYQPGGR.

This sequence belongs to the LIMR family.

The protein localises to the cell membrane. In terms of biological role, recruited to ligand-activated beta-2 adrenergic receptor/ADRB2, it negatively regulates the adrenergic receptor signaling pathway. May also regulate other G-protein coupled receptors including type-1 angiotensin II receptor/AGTR1. The sequence is that of G-protein coupled receptor-associated protein LMBRD2 from Homo sapiens (Human).